The chain runs to 101 residues: Urease subunit beta (101 aa).

Belongs to the urease beta subunit family. Heterotrimer of UreA (gamma), UreB (beta) and UreC (alpha) subunits. Three heterotrimers associate to form the active enzyme.

The protein resides in the cytoplasm. The catalysed reaction is urea + 2 H2O + H(+) = hydrogencarbonate + 2 NH4(+). It participates in nitrogen metabolism; urea degradation; CO(2) and NH(3) from urea (urease route): step 1/1. In Burkholderia pseudomallei (strain 668), this protein is Urease subunit beta.